The primary structure comprises 313 residues: Potassium channel subfamily K member 6 (313 aa).

Topologically, residues 1 to 4 (MRRG) are cytoplasmic. The helical transmembrane segment at 5–25 (ALLASALAAYAGYLALGALLV) threads the bilayer. Residues Asn79 and Asn85 are each glycosylated (N-linked (GlcNAc...) asparagine). Positions 90–115 (AWDFASALFFASTLVTTVGYGYTTPL) form an intramembrane region, pore-forming. K(+) contacts are provided by Thr106, Val107, Gly108, and Tyr109. The segment at 106–111 (TVGYGY) is selectivity filter 1. Residues 121-141 (AFSIVFALLGVPITMLLLTAS) traverse the membrane as a helical segment. Residues 142–172 (AQRLSLLLTHAPLSWLSLHWGWPPQRAARWH) lie on the Cytoplasmic side of the membrane. The chain crosses the membrane as a helical span at residues 173–193 (LVALLMVIVAIFFLVPAAVFA). Residues 199-223 (WSFLDAFYFCFISLSTIGLGDYVPG) constitute an intramembrane region (pore-forming). Thr214, Ile215, and Gly216 together coordinate K(+). A selectivity filter 2 region spans residues 214–219 (TIGLGD). The helical transmembrane segment at 236-256 (VLVTAYLFLGLVAMVLVLQTF) threads the bilayer. Over 257-313 (RRVSDLHGLTELILLPDPDPASLSQDEDDQVAVLDARTDLHQHLSAASHADYASIPR) the chain is Cytoplasmic. 2 short sequence motifs (lysosomal targeting signal) span residues 282–290 (DEDDQVAVL) and 308–312 (YASIP).

It belongs to the two pore domain potassium channel (TC 1.A.1.8) family. As to quaternary structure, homodimer; disulfide-linked. Post-translationally, N-glycosylation is necessary for targeting to lysosomes.

Its subcellular location is the late endosome membrane. It localises to the lysosome membrane. It catalyses the reaction K(+)(in) = K(+)(out). Its function is as follows. K(+) channel that conducts outward rectifying currents at the membranes of the endolysosomal system. Active in lysosomes where it regulates lysosome numbers and size. In macrophages, enables K(+) efflux coupled to ATP-induced NLRP3 inflammasome activation upon bacterial infection. Cooperates with ATP-gated P2RX7 to activate NLRP3 inflammasome, with P2RX7 conducting Ca(2+) and Na(+) influx that sets the membrane potential for K(+) efflux. The sequence is that of Potassium channel subfamily K member 6 from Mus musculus (Mouse).